We begin with the raw amino-acid sequence, 701 residues long: DNA ligase 2 (701 aa).

Polar residues predominate over residues 1 to 10; it reads MSPAPQNRQP. Positions 1–21 are disordered; that stretch reads MSPAPQNRQPSGVPVGGQFAA. Residues 64–68, 111–112, and glutamate 133 contribute to the NAD(+) site; these read DAEFD and SL. Catalysis depends on lysine 135, which acts as the N6-AMP-lysine intermediate. Residues arginine 156, glutamate 189, lysine 302, and lysine 326 each contribute to the NAD(+) site. Residues cysteine 420, cysteine 423, cysteine 436, and cysteine 441 each contribute to the Zn(2+) site. Over residues 603-613 the composition is skewed to low complexity; that stretch reads KAAPAAGAKAP. Residues 603–623 form a disordered region; sequence KAAPAAGAKAPKLTKPDGKPM. One can recognise a BRCT domain in the interval 615–701; sequence LTKPDGKPMN…FAQMVEDGEV (87 aa).

Belongs to the NAD-dependent DNA ligase family. LigA subfamily. Mg(2+) serves as cofactor. It depends on Mn(2+) as a cofactor.

It catalyses the reaction NAD(+) + (deoxyribonucleotide)n-3'-hydroxyl + 5'-phospho-(deoxyribonucleotide)m = (deoxyribonucleotide)n+m + AMP + beta-nicotinamide D-nucleotide.. Its function is as follows. DNA ligase that catalyzes the formation of phosphodiester linkages between 5'-phosphoryl and 3'-hydroxyl groups in double-stranded DNA using NAD as a coenzyme and as the energy source for the reaction. It is essential for DNA replication and repair of damaged DNA. The sequence is that of DNA ligase 2 from Pseudarthrobacter chlorophenolicus (strain ATCC 700700 / DSM 12829 / CIP 107037 / JCM 12360 / KCTC 9906 / NCIMB 13794 / A6) (Arthrobacter chlorophenolicus).